The sequence spans 189 residues: Elongation factor P (189 aa).

It belongs to the elongation factor P family.

It is found in the cytoplasm. It participates in protein biosynthesis; polypeptide chain elongation. Its function is as follows. Involved in peptide bond synthesis. Stimulates efficient translation and peptide-bond synthesis on native or reconstituted 70S ribosomes in vitro. Probably functions indirectly by altering the affinity of the ribosome for aminoacyl-tRNA, thus increasing their reactivity as acceptors for peptidyl transferase. The polypeptide is Elongation factor P (Chloroflexus aggregans (strain MD-66 / DSM 9485)).